The sequence spans 428 residues: Adenylosuccinate synthetase (428 aa).

GTP-binding positions include 12-18 (GDEGKGK) and 40-42 (GHT). The active-site Proton acceptor is Asp13. Mg(2+) is bound by residues Asp13 and Gly40. IMP-binding positions include 13 to 16 (DEGK), 38 to 41 (NAGH), Thr130, Arg144, Gln225, Thr240, and Arg304. Catalysis depends on His41, which acts as the Proton donor. 300-306 (ATTGRPR) contributes to the substrate binding site. Residues Arg306, 332–334 (KLD), and 415–417 (SVG) each bind GTP.

It belongs to the adenylosuccinate synthetase family. As to quaternary structure, homodimer. The cofactor is Mg(2+).

The protein localises to the cytoplasm. The catalysed reaction is IMP + L-aspartate + GTP = N(6)-(1,2-dicarboxyethyl)-AMP + GDP + phosphate + 2 H(+). Its pathway is purine metabolism; AMP biosynthesis via de novo pathway; AMP from IMP: step 1/2. Its function is as follows. Plays an important role in the de novo pathway of purine nucleotide biosynthesis. Catalyzes the first committed step in the biosynthesis of AMP from IMP. This chain is Adenylosuccinate synthetase, found in Lawsonia intracellularis (strain PHE/MN1-00).